We begin with the raw amino-acid sequence, 131 residues long: Small ribosomal subunit protein uS8 (131 aa).

This sequence belongs to the universal ribosomal protein uS8 family. Part of the 30S ribosomal subunit. Contacts proteins S5 and S12.

In terms of biological role, one of the primary rRNA binding proteins, it binds directly to 16S rRNA central domain where it helps coordinate assembly of the platform of the 30S subunit. This Janthinobacterium sp. (strain Marseille) (Minibacterium massiliensis) protein is Small ribosomal subunit protein uS8.